The primary structure comprises 41 residues: Large ribosomal subunit protein bL36 (41 aa).

Belongs to the bacterial ribosomal protein bL36 family.

The protein is Large ribosomal subunit protein bL36 of Rhizobium etli (strain CIAT 652).